The following is a 337-amino-acid chain: Low-density lipoprotein receptor class A domain-containing protein 3 (337 aa).

The signal sequence occupies residues Met-1–Ser-13. The Extracellular portion of the chain corresponds to Gln-14–Thr-169. Asn-20 is a glycosylation site (N-linked (GlcNAc...) asparagine). LDL-receptor class A domains are found at residues Glu-24 to Pro-61, Arg-66 to Thr-103, and Leu-108 to His-144. Cystine bridges form between Cys-25/Cys-38, Cys-33/Cys-51, Cys-45/Cys-60, Cys-67/Cys-80, Cys-74/Cys-93, Cys-87/Cys-102, Cys-109/Cys-121, Cys-116/Cys-134, and Cys-128/Cys-143. Residue Asn-101 is glycosylated (N-linked (GlcNAc...) asparagine). Residues Tyr-170 to Leu-190 traverse the membrane as a helical segment. Topologically, residues His-191–Val-337 are cytoplasmic. The segment covering Gln-243–Ser-253 has biased composition (polar residues). Residues Gln-243 to Val-337 form a disordered region. A compositionally biased stretch (low complexity) spans Arg-291–Thr-303.

It belongs to the LDLR family.

Its subcellular location is the cell membrane. The chain is Low-density lipoprotein receptor class A domain-containing protein 3 from Xenopus tropicalis (Western clawed frog).